We begin with the raw amino-acid sequence, 266 residues long: MSFFDSVKLDLVGRLFGIRNRGLAVTCCAVAVASIIAFPYIRRDYQTFLSGGPSYAPQNIRGYLIVCVLALFRQEQKGLAIYDRLPEKRRWLPDLPPRDGPRPITTSHIIQRQRNQAPDLKFALEELKATVIPRVQARHTDLTHLSLSKFEFHAEAIFLLPSVPIDDPKNVPSHDTVRRTKREIAHMHDYHDYTLHLALAAQDGKEVVSKGWGQRHPLAGPGVPGPPTEWTFIYAPRNEEELAVVEMIIEASIGYMTNDPAGKTIA.

A helical membrane pass occupies residues 22–41 (GLAVTCCAVAVASIIAFPYI).

This sequence belongs to the fungal luciferase family.

The protein resides in the membrane. The catalysed reaction is 3-hydroxyhispidin + O2 = (E)-caffeoylpyruvate + hnu + CO2. The enzyme catalyses 3-hydroxyhispidin + O2 = 4-[(E)-2-(3,4-dihydroxyphenyl)ethenyl]-1,7-dihydroxy-2,3,5-trioxabicyclo[2.2.2]oct-7-en-6-one. Luciferase; part of the gene cluster that mediates the fungal bioluminescence cycle. Uses the fungal luciferin 3-hydroxyhispidin as a substrate to produce an endoperoxide as a high-energy intermediate with decomposition that yields oxyluciferin (also known as caffeoylpyruvate) and light emission. The fungal bioluminescence cycle begins with the hispidin synthetase that catalyzes the formation of hispidin which is further hydroxylated by the hispidin-3-hydroxylase, yielding the fungal luciferin 3-hydroxyhispidin. The luciferase then produces an endoperoxide as a high-energy intermediate with decomposition that yields oxyluciferin and light emission. Oxyluciferin can be recycled to caffeic acid by caffeoylpyruvate hydrolase. The chain is Luciferase from Armillaria mellea (Honey mushroom).